We begin with the raw amino-acid sequence, 371 residues long: Queuine tRNA-ribosyltransferase (371 aa).

D90 serves as the catalytic Proton acceptor. Substrate-binding positions include 90–94 (DSGGF), D144, Q189, and G215. Residues 246–252 (GVGTPEN) form an RNA binding region. D265 functions as the Nucleophile in the catalytic mechanism. An RNA binding; important for wobble base 34 recognition region spans residues 270–274 (TRNAR). Positions 303, 305, 308, and 334 each coordinate Zn(2+).

Belongs to the queuine tRNA-ribosyltransferase family. As to quaternary structure, homodimer. Within each dimer, one monomer is responsible for RNA recognition and catalysis, while the other monomer binds to the replacement base PreQ1. It depends on Zn(2+) as a cofactor.

The enzyme catalyses 7-aminomethyl-7-carbaguanine + guanosine(34) in tRNA = 7-aminomethyl-7-carbaguanosine(34) in tRNA + guanine. It participates in tRNA modification; tRNA-queuosine biosynthesis. Functionally, catalyzes the base-exchange of a guanine (G) residue with the queuine precursor 7-aminomethyl-7-deazaguanine (PreQ1) at position 34 (anticodon wobble position) in tRNAs with GU(N) anticodons (tRNA-Asp, -Asn, -His and -Tyr). Catalysis occurs through a double-displacement mechanism. The nucleophile active site attacks the C1' of nucleotide 34 to detach the guanine base from the RNA, forming a covalent enzyme-RNA intermediate. The proton acceptor active site deprotonates the incoming PreQ1, allowing a nucleophilic attack on the C1' of the ribose to form the product. After dissociation, two additional enzymatic reactions on the tRNA convert PreQ1 to queuine (Q), resulting in the hypermodified nucleoside queuosine (7-(((4,5-cis-dihydroxy-2-cyclopenten-1-yl)amino)methyl)-7-deazaguanosine). The polypeptide is Queuine tRNA-ribosyltransferase (Helicobacter pylori (strain G27)).